The primary structure comprises 456 residues: Bifunctional protein GlmU (456 aa).

Positions 1–228 are pyrophosphorylase; that stretch reads MPQNTLNTVI…SHLAAGVNNK (228 aa). Residues 11–14, lysine 25, glutamine 75, 80–81, 102–104, glycine 138, glutamate 153, asparagine 168, and asparagine 226 contribute to the UDP-N-acetyl-alpha-D-glucosamine site; these read LAAG, GT, and YGD. Aspartate 104 is a binding site for Mg(2+). Asparagine 226 contacts Mg(2+). Positions 229–249 are linker; sequence RQLAELERIFQTEQAQELLKA. Positions 250–456 are N-acetyltransferase; sequence GVTLRDPARF…GWVRPEKNKQ (207 aa). UDP-N-acetyl-alpha-D-glucosamine-binding residues include arginine 332 and lysine 350. The active-site Proton acceptor is the histidine 362. UDP-N-acetyl-alpha-D-glucosamine is bound by residues tyrosine 365 and asparagine 376. Acetyl-CoA contacts are provided by residues alanine 379, 385-386, serine 404, alanine 422, and arginine 439; that span reads NY.

This sequence in the N-terminal section; belongs to the N-acetylglucosamine-1-phosphate uridyltransferase family. It in the C-terminal section; belongs to the transferase hexapeptide repeat family. In terms of assembly, homotrimer. Mg(2+) is required as a cofactor.

The protein localises to the cytoplasm. The enzyme catalyses alpha-D-glucosamine 1-phosphate + acetyl-CoA = N-acetyl-alpha-D-glucosamine 1-phosphate + CoA + H(+). It carries out the reaction N-acetyl-alpha-D-glucosamine 1-phosphate + UTP + H(+) = UDP-N-acetyl-alpha-D-glucosamine + diphosphate. It participates in nucleotide-sugar biosynthesis; UDP-N-acetyl-alpha-D-glucosamine biosynthesis; N-acetyl-alpha-D-glucosamine 1-phosphate from alpha-D-glucosamine 6-phosphate (route II): step 2/2. The protein operates within nucleotide-sugar biosynthesis; UDP-N-acetyl-alpha-D-glucosamine biosynthesis; UDP-N-acetyl-alpha-D-glucosamine from N-acetyl-alpha-D-glucosamine 1-phosphate: step 1/1. Its pathway is bacterial outer membrane biogenesis; LPS lipid A biosynthesis. Catalyzes the last two sequential reactions in the de novo biosynthetic pathway for UDP-N-acetylglucosamine (UDP-GlcNAc). The C-terminal domain catalyzes the transfer of acetyl group from acetyl coenzyme A to glucosamine-1-phosphate (GlcN-1-P) to produce N-acetylglucosamine-1-phosphate (GlcNAc-1-P), which is converted into UDP-GlcNAc by the transfer of uridine 5-monophosphate (from uridine 5-triphosphate), a reaction catalyzed by the N-terminal domain. The polypeptide is Bifunctional protein GlmU (Neisseria gonorrhoeae).